The following is a 312-amino-acid chain: Malate dehydrogenase (312 aa).

Residues 12–17 (GAGFTG) and Asp36 contribute to the NAD(+) site. Arg87 and Arg93 together coordinate substrate. NAD(+) contacts are provided by residues Asn100 and 123–125 (LTN). Asn125 serves as a coordination point for substrate. Ser149 carries the post-translational modification Phosphoserine. Residue Arg156 participates in substrate binding. His180 (proton acceptor) is an active-site residue.

It belongs to the LDH/MDH superfamily. MDH type 3 family.

It carries out the reaction (S)-malate + NAD(+) = oxaloacetate + NADH + H(+). Its function is as follows. Catalyzes the reversible oxidation of malate to oxaloacetate. In Anoxybacillus flavithermus (strain DSM 21510 / WK1), this protein is Malate dehydrogenase.